The chain runs to 201 residues: Recombination protein RecR (201 aa).

Residues 57 to 72 (CADCRTFTEQDVCNIC) form a C4-type zinc finger. Positions 81-176 (GQICVVESPA…EASRIAHGVP (96 aa)) constitute a Toprim domain.

It belongs to the RecR family.

May play a role in DNA repair. It seems to be involved in an RecBC-independent recombinational process of DNA repair. It may act with RecF and RecO. The protein is Recombination protein RecR of Citrobacter koseri (strain ATCC BAA-895 / CDC 4225-83 / SGSC4696).